The primary structure comprises 617 residues: V-type proton ATPase catalytic subunit A (617 aa).

257–264 (GAFGCGKT) is a binding site for ATP.

The protein belongs to the ATPase alpha/beta chains family. In terms of assembly, V-ATPase is a heteromultimeric enzyme composed of a peripheral catalytic V1 complex (components A to H) attached to an integral membrane V0 proton pore complex (components: a, c, c', c'', d, e, f and VOA1). Is a probable target for sumoylation.

It localises to the vacuole membrane. The catalysed reaction is ATP + H2O + 4 H(+)(in) = ADP + phosphate + 5 H(+)(out). Catalytic subunit of the V1 complex of vacuolar(H+)-ATPase (V-ATPase), a multisubunit enzyme composed of a peripheral complex (V1) that hydrolyzes ATP and a membrane integral complex (V0) that translocates protons. V-ATPase is responsible for acidifying and maintaining the pH of intracellular compartments. Mediates oxidative stress response, filamentous growth, and plays an important role in virulence. This is V-type proton ATPase catalytic subunit A from Candida albicans (strain SC5314 / ATCC MYA-2876) (Yeast).